A 505-amino-acid chain; its full sequence is Flagellin (505 aa).

It belongs to the bacterial flagellin family.

Its subcellular location is the secreted. The protein resides in the bacterial flagellum. Flagellin is the subunit protein which polymerizes to form the filaments of bacterial flagella. The sequence is that of Flagellin (fliC) from Salmonella enteritidis.